Reading from the N-terminus, the 147-residue chain is UPF0306 protein YhbP (147 aa).

The protein belongs to the UPF0306 family.

This Escherichia coli O157:H7 (strain EC4115 / EHEC) protein is UPF0306 protein YhbP.